Here is a 276-residue protein sequence, read N- to C-terminus: MKLCGFEVGLNQPLFLIAGPCVIESLQLQLDTAGVLKEITSKLGLNFIFKSSFDKANRTSGSSFRGPGLEEGLKVLEAVKTQIGVPVLTDVHEYTPIDEVATVVDVLQTPAFLVRQTDFIRNVCAVGKPVNIKKGQFLSPWDMKPVVEKAKSTGNSQILVCERGASFGYNNLVSDMRSLAVMRETGCPVVFDATHSVQLPGAQGGRSGGQREFVPVLARAAVAVGISGLFAETHPDPPNALSDGPNAWPLRTMAMLLETLVELDAVTKKRGFLEQD.

It belongs to the KdsA family.

The protein resides in the cytoplasm. The enzyme catalyses D-arabinose 5-phosphate + phosphoenolpyruvate + H2O = 3-deoxy-alpha-D-manno-2-octulosonate-8-phosphate + phosphate. Its pathway is carbohydrate biosynthesis; 3-deoxy-D-manno-octulosonate biosynthesis; 3-deoxy-D-manno-octulosonate from D-ribulose 5-phosphate: step 2/3. It participates in bacterial outer membrane biogenesis; lipopolysaccharide biosynthesis. The polypeptide is 2-dehydro-3-deoxyphosphooctonate aldolase (Xylella fastidiosa (strain M23)).